The primary structure comprises 580 residues: 2-succinyl-5-enolpyruvyl-6-hydroxy-3-cyclohexene-1-carboxylate synthase (580 aa).

The segment at L178–D199 is disordered.

The protein belongs to the TPP enzyme family. MenD subfamily. As to quaternary structure, homodimer. It depends on Mg(2+) as a cofactor. Requires Mn(2+) as cofactor. The cofactor is thiamine diphosphate.

It carries out the reaction isochorismate + 2-oxoglutarate + H(+) = 5-enolpyruvoyl-6-hydroxy-2-succinyl-cyclohex-3-ene-1-carboxylate + CO2. The protein operates within quinol/quinone metabolism; 1,4-dihydroxy-2-naphthoate biosynthesis; 1,4-dihydroxy-2-naphthoate from chorismate: step 2/7. It participates in quinol/quinone metabolism; menaquinone biosynthesis. Catalyzes the thiamine diphosphate-dependent decarboxylation of 2-oxoglutarate and the subsequent addition of the resulting succinic semialdehyde-thiamine pyrophosphate anion to isochorismate to yield 2-succinyl-5-enolpyruvyl-6-hydroxy-3-cyclohexene-1-carboxylate (SEPHCHC). The chain is 2-succinyl-5-enolpyruvyl-6-hydroxy-3-cyclohexene-1-carboxylate synthase from Roseiflexus castenholzii (strain DSM 13941 / HLO8).